The following is a 177-amino-acid chain: Probable phospholipid hydroperoxide glutathione peroxidase (177 aa).

Residue cysteine 42 is part of the active site.

The protein belongs to the glutathione peroxidase family.

The protein resides in the cytoplasm. It carries out the reaction a hydroperoxy polyunsaturated fatty acid + 2 glutathione = a hydroxy polyunsaturated fatty acid + glutathione disulfide + H2O. Functionally, protects cells and enzymes from oxidative damage, by catalyzing the reduction of hydrogen peroxide, lipid peroxides and organic hydroperoxide, by glutathione. The chain is Probable phospholipid hydroperoxide glutathione peroxidase from Encephalitozoon cuniculi (strain GB-M1) (Microsporidian parasite).